Reading from the N-terminus, the 253-residue chain is 5-oxoprolinase subunit A (253 aa).

Belongs to the LamB/PxpA family. Forms a complex composed of PxpA, PxpB and PxpC.

The catalysed reaction is 5-oxo-L-proline + ATP + 2 H2O = L-glutamate + ADP + phosphate + H(+). Its function is as follows. Catalyzes the cleavage of 5-oxoproline to form L-glutamate coupled to the hydrolysis of ATP to ADP and inorganic phosphate. The chain is 5-oxoprolinase subunit A from Bacillus cereus (strain ATCC 14579 / DSM 31 / CCUG 7414 / JCM 2152 / NBRC 15305 / NCIMB 9373 / NCTC 2599 / NRRL B-3711).